Reading from the N-terminus, the 287-residue chain is MKKTIMSFVAVAALSTTAFGAHASAKEITVQKGDTLWGISQKNGVNLKDLKEWNKLTSDKIIAGEKLTISSEETTTTGQYTIKAGDTLSKIAQKFGTTVNNLKVWNNLSSDMIYAGSTLSVKGQATAANTATENAQTNAPQAAPKQEAVQKEQPKQEAVQQQPKQETKAEAETSVNTEEKAVQSNTNNQEASKELTVTATAYTANDGGISGVTATGIDLNKNPNAKVIAVDPNVIPLGSKVYVEGYGEATAADTGGAIKGNKIDVFVPSKSDASNWGVKTVSVKVLN.

Positions 1 to 25 are cleaved as a signal peptide; it reads MKKTIMSFVAVAALSTTAFGAHASA. LysM domains lie at 26–69 and 78–121; these read KEIT…KLTI and GQYT…TLSV. Over residues 130–143 the composition is skewed to low complexity; the sequence is TATENAQTNAPQAA. A disordered region spans residues 130 to 193; sequence TATENAQTNA…SNTNNQEASK (64 aa). Positions 165–181 are enriched in basic and acidic residues; that stretch reads QETKAEAETSVNTEEKA. Over residues 182 to 193 the composition is skewed to polar residues; the sequence is VQSNTNNQEASK.

The protein localises to the secreted. Its subcellular location is the cell wall. This is Cell wall-binding protein YocH (yocH) from Bacillus subtilis (strain 168).